The primary structure comprises 458 residues: MAALSKSIPHNCYEIGHTWHPSCRVSFLQITWGALEESLRIYAPLYLIAAVLRKRKLEYYLYKLLPEILQSASFLTANGALYITFFCILRKILGKFYSWTPGFGAALPASYVAILIERKSRRGLLTIYMANLATETLFRMGVARGTITTLRNGEVLLFCITAAMYMFFFRCKDGLKGFTFSALRFIVGKEEIPTHSYSPETAYAKVEQKREKHKGTPRAMSIIALVRTLVDSVCKHGPRHRCCKHYEDNCISYCIKGFIRMFSVGYLIQCCLRIPSAFRHLFTEPSRLLSLFYNKENFQLGAFLGSFVSIYKGTSCFLRWIRNLDDELHAIVAGFLAGVSMMFYKSTTISMYLASKLVETMYFKGIEAGKVPYFPQADTIIYSISTAICFHAAVMEVQNLRPSYWKFLLRLTKGRFALMNRKALDVFGTGASREFHNFIPRLDPRYTVVTPELPIDFS.

The next 6 helical transmembrane spans lie at 68-88 (ILQSASFLTANGALYITFFCI), 96-116 (FYSWTPGFGAALPASYVAILI), 149-169 (TLRNGEVLLFCITAAMYMFFF), 298-318 (FQLGAFLGSFVSIYKGTSCFL), 331-351 (IVAGFLAGVSMMFYKSTTISM), and 377-397 (ADTIIYSISTAICFHAAVMEV).

Belongs to the TMEM135 family.

It is found in the mitochondrion membrane. Its subcellular location is the peroxisome membrane. Functionally, involved in mitochondrial metabolism by regulating the balance between mitochondrial fusion and fission. May act as a regulator of mitochondrial fission that promotes DNM1L-dependent fission through activation of DNM1L. May be involved in peroxisome organization. This chain is Transmembrane protein 135, found in Mus musculus (Mouse).